The following is a 101-amino-acid chain: Large ribosomal subunit protein uL24 (101 aa).

The protein belongs to the universal ribosomal protein uL24 family. Part of the 50S ribosomal subunit.

One of two assembly initiator proteins, it binds directly to the 5'-end of the 23S rRNA, where it nucleates assembly of the 50S subunit. In terms of biological role, one of the proteins that surrounds the polypeptide exit tunnel on the outside of the subunit. This Streptococcus thermophilus (strain ATCC BAA-491 / LMD-9) protein is Large ribosomal subunit protein uL24.